The chain runs to 335 residues: 3-hydroxyisobutyrate dehydrogenase, mitochondrial (335 aa).

Residues 1–35 (MAASLGFRGAASGLRYWSGRRRPVGSLAAVCSRSM) constitute a mitochondrion transit peptide. 39–68 (TPVGFIGLGNMGNPMAKNLIKHGYPLILYD) serves as a coordination point for NAD(+). Lys59 and Lys75 each carry N6-acetyllysine; alternate. 2 positions are modified to N6-succinyllysine; alternate: Lys59 and Lys75. N6-succinyllysine is present on Lys94. Residues 102–103 (LP) and Asn107 contribute to the NAD(+) site. Lys120 carries the N6-acetyllysine modification. Thr133 is an NAD(+) binding site. At Lys140 the chain carries N6-succinyllysine. Lys144 carries the N6-acetyllysine modification. Lys148 carries the post-translational modification N6-acetyllysine; alternate. Lys148 is subject to N6-succinyllysine; alternate. Residue Lys208 is part of the active site. N6-acetyllysine; alternate occurs at positions 237 and 241. 2 positions are modified to N6-succinyllysine; alternate: Lys237 and Lys241. Lys283 provides a ligand contact to NAD(+). The residue at position 296 (Lys296) is an N6-succinyllysine. Lys320 is subject to N6-acetyllysine; alternate. Lys320 carries the N6-succinyllysine; alternate modification.

Belongs to the HIBADH-related family. 3-hydroxyisobutyrate dehydrogenase subfamily. In terms of assembly, homodimer. As to expression, higher level in kidney, liver, and heart than in muscle.

The protein resides in the mitochondrion. It carries out the reaction 3-hydroxy-2-methylpropanoate + NAD(+) = 2-methyl-3-oxopropanoate + NADH + H(+). It participates in amino-acid degradation; L-valine degradation. The polypeptide is 3-hydroxyisobutyrate dehydrogenase, mitochondrial (Hibadh) (Rattus norvegicus (Rat)).